Reading from the N-terminus, the 697-residue chain is MNKTPLLSVSPNLHELHICELLGNNANQNSRYSHIVKQYIAEVLQSSDDKIAATNTQPHLLTLGQLGFGDGHEIILLLAALQEANLQNPLIQQQTRIHISVFEQGPVNCKQLQHTWQQQGLLDSDHHLFDFTQALLNGEIAAIEGCQRLSLLQNQIIIDLYQGSPLAQAKTIATPNKQRITHWFALPHTNQEAHSDQYFHQRSVWEYGRLSVDNATFLAASTNDENIAPTIKKQLAFCGFLSSTSFKSTDDIAIAERNALRQQLQQQFAYNPLPPLHSNNNSPIAIIGGGIASASLALSLAERGKDVIIYCKDDTLGQGASGNKQGAIYPLLTPENGSLSQFFQQVFLYSRRRIQALVDDGYDIGHEWCGVLHTGFDQRSQTRLDKIIDGQAWPSEIAFAVSPHQATQLANVDIDKPGFYYPLGGWACPFEFAQASIAKAQTLTKVRIVYNSDISSLESHSSGWQLFSAEDNTPIATHEQVVIASGAQLTQYKQTKNLQITGFRGQVSHVPPQGELAQLNTVICANGYLTPQHNQLHCVGASYVKDPQHLDFCPIEQHENSLKMKQSFPNSNWPNDIDVSNNDARVGVRMVSRDHFPVMGCAPDVEALFTRYAVQQQSKDKPSLWQHYWQTTPAPIYDGLYVLGGLGSRGLSSGPLVAECLAANLCGELSPLSVELQALLSPNRMWLRKLLKGKALM.

The segment at 1–269 (MNKTPLLSVS…LRQQLQQQFA (269 aa)) is tRNA (mnm(5)s(2)U34)-methyltransferase. Positions 287–697 (IGGGIASASL…RKLLKGKALM (411 aa)) are FAD-dependent cmnm(5)s(2)U34 oxidoreductase.

In the N-terminal section; belongs to the methyltransferase superfamily. tRNA (mnm(5)s(2)U34)-methyltransferase family. It in the C-terminal section; belongs to the DAO family. FAD serves as cofactor.

The protein resides in the cytoplasm. It carries out the reaction 5-aminomethyl-2-thiouridine(34) in tRNA + S-adenosyl-L-methionine = 5-methylaminomethyl-2-thiouridine(34) in tRNA + S-adenosyl-L-homocysteine + H(+). Functionally, catalyzes the last two steps in the biosynthesis of 5-methylaminomethyl-2-thiouridine (mnm(5)s(2)U) at the wobble position (U34) in tRNA. Catalyzes the FAD-dependent demodification of cmnm(5)s(2)U34 to nm(5)s(2)U34, followed by the transfer of a methyl group from S-adenosyl-L-methionine to nm(5)s(2)U34, to form mnm(5)s(2)U34. This is tRNA 5-methylaminomethyl-2-thiouridine biosynthesis bifunctional protein MnmC from Shewanella frigidimarina (strain NCIMB 400).